Reading from the N-terminus, the 1857-residue chain is Fatty acid synthase subunit alpha (1857 aa).

A disordered region spans residues 96-132 (EEEPEATEPAPSATPAAPAAAPAAGAPPPPPSAGPAA). The segment covering 102-119 (TEPAPSATPAAPAAAPAA) has biased composition (low complexity). Residues 139-214 (VTAVDILRTL…ASMQATFNGQ (76 aa)) form the Carrier domain. O-(pantetheine 4'-phosphoryl)serine is present on serine 174. Residues 577–604 (QIIPQENGHSKKGGRSAAKRNTPTRPGK) form a disordered region. Residues 648–845 (KNVLMTGAGA…GAVIGWTRGT (198 aa)) are beta-ketoacyl reductase. Positions 1092–1633 (LQEIVIQEDL…QKGAQVIGIH (542 aa)) constitute a Ketosynthase family 3 (KS3) domain. Catalysis depends on for beta-ketoacyl synthase activity residues cysteine 1275, histidine 1518, and histidine 1559. Residues aspartate 1743, valine 1744, and glutamate 1745 each coordinate Mg(2+). Acetyl-CoA is bound by residues 1743-1745 (DVE), tyrosine 1769, serine 1779, 1788-1798 (EAVFKSLGVSS), 1812-1815 (VDAN), and 1842-1844 (ISH). Residues serine 1843 and histidine 1844 each coordinate Mg(2+).

This sequence belongs to the thiolase-like superfamily. Fungal fatty acid synthetase subunit alpha family. In terms of assembly, [Alpha(6)beta(6)] hexamers of two multifunctional subunits (alpha and beta).

The enzyme catalyses acetyl-CoA + n malonyl-CoA + 2n NADPH + 4n H(+) = a long-chain-acyl-CoA + n CoA + n CO2 + 2n NADP(+).. It catalyses the reaction a fatty acyl-[ACP] + malonyl-[ACP] + H(+) = a 3-oxoacyl-[ACP] + holo-[ACP] + CO2. It carries out the reaction a (3R)-hydroxyacyl-[ACP] + NADP(+) = a 3-oxoacyl-[ACP] + NADPH + H(+). Fatty acid synthetase catalyzes the formation of long-chain fatty acids from acetyl-CoA, malonyl-CoA and NADPH. The alpha subunit contains domains for: acyl carrier protein, 3-oxoacyl-[acyl-carrier-protein] reductase, and 3-oxoacyl-[acyl-carrier-protein] synthase. In Penicillium patulum (Penicillium griseofulvum), this protein is Fatty acid synthase subunit alpha (FAS2).